The chain runs to 459 residues: UDP-N-acetylmuramate--L-alanine ligase (459 aa).

Position 113 to 119 (Gly-113 to Ser-119) interacts with ATP.

It belongs to the MurCDEF family.

The protein localises to the cytoplasm. The catalysed reaction is UDP-N-acetyl-alpha-D-muramate + L-alanine + ATP = UDP-N-acetyl-alpha-D-muramoyl-L-alanine + ADP + phosphate + H(+). Its pathway is cell wall biogenesis; peptidoglycan biosynthesis. In terms of biological role, cell wall formation. This is UDP-N-acetylmuramate--L-alanine ligase from Desulfotalea psychrophila (strain LSv54 / DSM 12343).